Consider the following 257-residue polypeptide: MKKAFILSAAAAVGLFTFGGVQQASAKELSCQPVVTVKTGNTVQNMSLNDAVKKLHINTNIKTLNAANEKEMKQLLQKHAKQSNVKVQDVQKTETAKPAQKTTEKAAADQNTASKAPATAEKTNTTTSAPSSVSAYEKKVVELTNAERQKQGLKPLQIDETLSKSARAKSQDMKDKNYFDHQSPTYGSPFDMMKSFGISYKTAGENIAKGQKTPEEVVKAWMNSEGHRKNILNPNFTHIGVGYVESGSIWTQQFIGK.

An N-terminal signal peptide occupies residues 1 to 26; that stretch reads MKKAFILSAAAAVGLFTFGGVQQASA. The disordered stretch occupies residues 80–135; the sequence is AKQSNVKVQDVQKTETAKPAQKTTEKAAADQNTASKAPATAEKTNTTTSAPSSVSA. A compositionally biased stretch (polar residues) spans 121–134; sequence EKTNTTTSAPSSVS. One can recognise an SCP domain in the interval 141-254; that stretch reads VELTNAERQK…ESGSIWTQQF (114 aa).

This is an uncharacterized protein from Bacillus subtilis (strain 168).